The following is a 308-amino-acid chain: 1D-myo-inositol 2-acetamido-2-deoxy-alpha-D-glucopyranoside deacetylase (308 aa).

Positions 13, 16, and 147 each coordinate Zn(2+).

This sequence belongs to the MshB deacetylase family. The cofactor is Zn(2+).

The enzyme catalyses 1D-myo-inositol 2-acetamido-2-deoxy-alpha-D-glucopyranoside + H2O = 1D-myo-inositol 2-amino-2-deoxy-alpha-D-glucopyranoside + acetate. Catalyzes the deacetylation of 1D-myo-inositol 2-acetamido-2-deoxy-alpha-D-glucopyranoside (GlcNAc-Ins) in the mycothiol biosynthesis pathway. The protein is 1D-myo-inositol 2-acetamido-2-deoxy-alpha-D-glucopyranoside deacetylase of Mycobacterium leprae (strain Br4923).